The chain runs to 89 residues: Small ribosomal subunit protein uS15 (89 aa).

The span at 1–21 (MSITPERKQEMIKDYATKEGD) shows a compositional bias: basic and acidic residues. Positions 1–23 (MSITPERKQEMIKDYATKEGDTG) are disordered.

Belongs to the universal ribosomal protein uS15 family. Part of the 30S ribosomal subunit. Forms a bridge to the 50S subunit in the 70S ribosome, contacting the 23S rRNA.

One of the primary rRNA binding proteins, it binds directly to 16S rRNA where it helps nucleate assembly of the platform of the 30S subunit by binding and bridging several RNA helices of the 16S rRNA. Functionally, forms an intersubunit bridge (bridge B4) with the 23S rRNA of the 50S subunit in the ribosome. This is Small ribosomal subunit protein uS15 from Rhodospirillum rubrum (strain ATCC 11170 / ATH 1.1.1 / DSM 467 / LMG 4362 / NCIMB 8255 / S1).